An 846-amino-acid chain; its full sequence is Protein IRS1 (846 aa).

Disordered stretches follow at residues 1–82 (MAQR…NFWH), 366–385 (TGTA…ETEA), 606–626 (WLME…ATMP), and 714–846 (QVIP…HVHH). Over residues 16–25 (RGRGAGGPSG) the composition is skewed to gly residues. A compositionally biased stretch (low complexity) spans 26–56 (VGSSPPSSCVPMGAPSTAGTGASAAATTTPG). The span at 722 to 732 (EPEDDDEDPTY) shows a compositional bias: acidic residues. The span at 832-846 (RPKKCQTHAPHHVHH) shows a compositional bias: basic residues.

The protein belongs to the herpesviridae US22 family. In terms of assembly, interacts (via N-terminus) with the viral DNA polymerase accessory subunit UL44. Interacts (via C-terminus) with host EIF2AK2/PKR.

Its subcellular location is the virion. It localises to the host cytoplasm. It is found in the host nucleus. In terms of biological role, inhibits the establishment of the antiviral state in the infected cell. Prevents the phosphorylation of the host eukaryotic translation initiation factor eIF-2alpha and thus the shutoff of viral and cellular protein synthesis by directly interacting with EIF2AK2/PKR. May also participate in viral DNA replication by interacting with the DNA polymerase accessory protein and the lytic origin of replication, oriLyt. The protein is Protein IRS1 (IRS1) of Homo sapiens (Human).